The primary structure comprises 1245 residues: Trafficking protein particle complex II-specific subunit 130 homolog (1245 aa).

2 disordered regions span residues 488–524 and 884–903; these read GDGS…TSLP and HVGG…TRKV. Low complexity-rich tracts occupy residues 495 to 507 and 888 to 898; these read ANSK…SASN and TDASKTSSSST.

The protein belongs to the TMEM1 family. As to quaternary structure, part of the multisubunit TRAPP (transport protein particle) II complex composed of BET3, BET5, TRS20, TRS23, TRS31, TRS33, TRS65, TRS85, TRS120 and TRS130.

It is found in the golgi apparatus. Its subcellular location is the trans-Golgi network. The protein resides in the early endosome. Specific subunit of the TRAPP II complex, a highly conserved vesicle tethering complex that is required for the proper transport of proteins in post-Golgi trafficking pathways to the growing cell plate in mitotic active cells. This chain is Trafficking protein particle complex II-specific subunit 130 homolog, found in Oryza sativa subsp. japonica (Rice).